Here is a 612-residue protein sequence, read N- to C-terminus: Chaperone protein DnaK (612 aa).

T174 is subject to Phosphothreonine; by autocatalysis. The interval 579 to 612 (GSAGTGAGSQAGSAAGSGDGQSMDAEFKVKDEDK) is disordered. A compositionally biased stretch (gly residues) spans 581–597 (AGTGAGSQAGSAAGSGD). Positions 603–612 (AEFKVKDEDK) are enriched in basic and acidic residues.

This sequence belongs to the heat shock protein 70 family.

Functionally, acts as a chaperone. The protein is Chaperone protein DnaK of Symbiobacterium thermophilum (strain DSM 24528 / JCM 14929 / IAM 14863 / T).